A 265-amino-acid chain; its full sequence is Protein Exd1 homolog (265 aa).

The 51-residue stretch at 32 to 82 (EKQLDRIVLIYQVDTTYHSALKDIKDQKIISLLVEPSFYGRHHPTSILVVA) folds into the 3'-5' exonuclease domain.

This sequence belongs to the EXD1 family. Homodimer.

RNA-binding protein. Inactive exonuclease. The sequence is that of Protein Exd1 homolog from Drosophila melanogaster (Fruit fly).